Reading from the N-terminus, the 585-residue chain is Sodium/calcium exchanger NCL (585 aa).

A run of 5 helical transmembrane segments spans residues 83–103 (VFLI…LSAG), 106–126 (LLLE…MLGA), 149–169 (VSVG…VIWG), 212–232 (IMAI…LGST), and 239–259 (VLIA…YQVF). EF-hand domains lie at 299-334 (PDEH…ISFE) and 339-374 (DKDD…WLIQ). Residues Asp-312, Asn-314, Asp-316, His-318, Glu-323, Asp-352, Asp-356, Gln-358, and Glu-363 each contribute to the Ca(2+) site. 2 helical membrane-spanning segments follow: residues 427–447 (WITI…AAFA) and 457–477 (FSAA…PLAT). Asn-478 carries N-linked (GlcNAc...) asparagine glycosylation. A run of 3 helical transmembrane segments spans residues 505–525 (CGGV…IVYV), 532–552 (FSSE…FASF), and 558–578 (LWTC…VYIL).

It belongs to the Ca(2+):cation antiporter (CaCA) (TC 2.A.19) family. As to expression, expressed in roots, leaves, stems, petals, stamens, ovules and siliques.

Its subcellular location is the cell membrane. It is found in the vacuole membrane. In terms of biological role, possesses sodium/calcium exchanger (NCX) activity when expressed in a heterologous mammalian CHO-K1 cell system. Does not possess cation/proton exchanger (CAX) or sodium/proton (NHX) activity when expressed in a heterologous yeast cell system. Has the ability to bind calcium in vitro. Participates in the maintenance of calcium homeostasis. May play a role in auxin response, diurnal rhythm and flowering time. Involved in salt stress response. This Arabidopsis thaliana (Mouse-ear cress) protein is Sodium/calcium exchanger NCL.